A 410-amino-acid polypeptide reads, in one-letter code: Elongation factor Tu, chloroplastic (410 aa).

Positions 10 to 214 (KPHVNIGTIG…QVDAYIPTPE (205 aa)) constitute a tr-type G domain. Residues 19 to 26 (GHVDHGKT) form a G1 region. 19–26 (GHVDHGKT) is a binding site for GTP. Thr26 contacts Mg(2+). Residues 60–64 (GITIN) form a G2 region. The tract at residues 81 to 84 (DCPG) is G3. GTP is bound by residues 81 to 85 (DCPGH) and 136 to 139 (NKED). Residues 136–139 (NKED) are G4. Positions 174 to 176 (SAL) are G5.

The protein belongs to the TRAFAC class translation factor GTPase superfamily. Classic translation factor GTPase family. EF-Tu/EF-1A subfamily.

The protein resides in the plastid. It localises to the chloroplast. The catalysed reaction is GTP + H2O = GDP + phosphate + H(+). In terms of biological role, GTP hydrolase that promotes the GTP-dependent binding of aminoacyl-tRNA to the A-site of ribosomes during protein biosynthesis. The polypeptide is Elongation factor Tu, chloroplastic (tufA) (Chlorokybus atmophyticus (Soil alga)).